The chain runs to 60 residues: Large ribosomal subunit protein bL32 (60 aa).

It belongs to the bacterial ribosomal protein bL32 family.

The polypeptide is Large ribosomal subunit protein bL32 (Oenococcus oeni (strain ATCC BAA-331 / PSU-1)).